The chain runs to 2495 residues: MEVLQCDGCDFRAPSYEDLKAHIQDVHTAFLQPTDVAEDNDDEPLSGSMNASNQTEVEFSSIKDEFVIAEDLPGQSATALGSGGYYGHSPGYYGQHITPNPKPTNKFFQCKFCVRYFRSKNLLIEHTRKVHGAQAEESPTGPPVPGSLNYNIMMHEGFGKVFSCQFCTYKSPRRARIIKHQKMYHKNSLKESTAPPPAPAPLPDPLVPPVSLQDPCKELPAEVVERSILESMVKPLTKSRGNFCCEWCSYQTPRRERWCDHMMKKHRSMVKILSSIRQQEGPNVSEAQNDNEPSPTSNSTYLSMNAASREMPNANVSNFRGSMGNSIMRPNSSSTSKFSSSMSYPQMKPKSPHNSGLVNLTERSRYGMSDMTNSSADLDTNSMLNDSSSDEDLNEVDSENGLSVLDHQASGLSAEQLMGSDGNKLLETKGIPFRRFMNRFQCPFCPFLTMHRRSISRHIENIHLSGKTAVYKCDECPFTCKSSLKLGAHKQCHTGTSDWDTVNSQSESLSSSLNEGMVSYESSSINGRKSGVMLDPLQQQQPPQPPPPLPPPPPPPSQPLPQPPPPPLQSPHQVPPPTQQPQPPTQAPPLHPYKCTMCSYSTMTLKGLRVHQQHKHSFCDNLPKFEGQPSSLPLENETDSHPSSSNTVKKSQTSILGLSSKNNFVAKANRKLASDFPLDLSPVKKRTRIDEIASNLQSKINQTKLQEDAIINVEDDEEEEDDNEVEIEVELDREEEATDPIMEVPTAFSAQQIWARDASEAQKEPNYRSITHDYTATNGAEIELTLSEDEEDYYGSSASMKDQVSNAALLNTQPAIYGTEPSNENTDFGDSGRLYYCKHCDFNNKSARSVSTHYQRMHPYIKFSFRYILDPNDHSAVYRCLECYIDYTNFEDLQQHYGEHHPEAMNVLNFDHSDLIYRCRFCSYTSPNVRSLMPHYQRMHPTVKINNAMIFSSYVVEQQEGLNAESQTLREILNSAPKSMATSTPVARGGGLPATFNKNTPPKTFTPECESQKDPSVNTVVVYDCDVCSFASPNMHSVLVHYQKKHPEEKASYFRIQKTMRMVSVDRGSALSQLSFEVGAPMSPKMSNMGSPPPPQPPPPDLSIELYYCKHCSYSNRSVVGVLVHYQKRHPEIKVTAKYIRQAPPTAAMMRGAEGLQDSPRPPAPLQLNSSERDCPPVETEMFFCQHCDYGNRTVKGVLIHYQKKHRDFKANADVIRQHTATIRSLCDRNQKPASCVLLPASGMERDKTKLRALKCRQCSYTSPYFYALRKHIKKDHPALKATVTSIMRWAFLDGLIEAGYHCEWCIYSHMEPSGLLLHYQRRHPEHYVDYTYMATKLWAGPDPSSPTLTMSAEAKTYRCRDCVFEAVSIWDITNHYQAFHPWAMNGDESVLLDIIKEKDGVDKALLAPEELIGPVNCENSIPNPLPEQEAECPEDARLSPEKSIHLASANPAISSTPYQCTVCQSEYNNLHGLLTHYGKKHPGMKVKAADFAQDIDINPGAVYKCRHCPYINTRIHGVLTHYQKRHPAIKVTAEDFVHDVEQSADISQNDVEETSRIFKQGYGAYRCKLCPYTHGTLEKLKIHYEKYHNQPEFDVFSPPPPKLPVSLEPEITTEVSPSQVSVTEEEVGEDPMSTAHFSTSHLVSHTVFRCQLCKYFCSTRKGIARHYRIKHNNVRAQPEGKNNLFKCALCAYTNPIRKGLAAHYQKRHDIDAYYTHCLAASRTISDKPNKVIIPSPPKDDSPQLSEELRRAVEKKKCSLCSFQSFSKKGIVSHYMKRHPGVFPKKQHASKLGGYFTAVYADEHEKPPLMEEEERSSFERAEVEGEAQDIEWLPFRCIKCFKLSFSTAELLCMHYTDHHSRDLKRDFVILGSGPRFQNSTFQCKHCDSKLQSIAELTSHLNIHNEEFQKRAKRQERRKQLLSKQKYADGAFADFKQERPFGHLEEVPKIKERKVVGYKCKFCVEVHPTLRAICNHLRKHVQYGSVPAVSAAVKGLRSHERSHLALAMFTREDKYSCQYCSFVSAFRHNLDRHMQTHHGHHKPFRCKLCSFKSSYNSRLKTHILKAHAGEHAYKCSWCSFSTMTISQLKEHSLKVHGKALTLPRPRIVSLLSSHAHPSSQKATPAEEVEDSNDSSYSEPPDVQQQLNHYQSAALARNKSRVSPVPPSGTAAGTEQKAEAVLHCEFCEFSSGYIQSIRRHYRDKHGGKKLFKCKDCSFYTGFKSAFTMHVEAGHSAVPEEGPKDLRCPLCLYHTKYKRNMIDHIVLHREERVVPIEVCRSKLSKYLQGVVFRCDKCTFTCSSDESLQQHIEKHNELKPYKCQLCYYETKHTEELDTHLRDEHKVSRNFELVGRVNLDQLEQMKEKIESSSSEDEDKDDEMSSKAEDRELMRFADRGPGVNTEKRFPCEFCGRAFSQGSEWERHVLRHGMSLHDTNQVSRNEIHTKEMVEESMQLPSIEAKEDDEPIGIDFPLKSETVTICVVAADKSLLEDAEAKNE.

3 C2H2-type zinc fingers span residues 4-27 (LQCDGCDFRAPSYEDLKAHIQDVH), 108-131 (FQCKFCVRYFRSKNLLIEHTRKVH), and 162-185 (FSCQFCTYKSPRRARIIKHQKMYH). A Glycyl lysine isopeptide (Lys-Gly) (interchain with G-Cter in SUMO1); alternate cross-link involves residue Lys-20. Lys-20 is covalently cross-linked (Glycyl lysine isopeptide (Lys-Gly) (interchain with G-Cter in SUMO2); alternate). Positions 215–241 (PCKELPAEVVERSILESMVKPLTKSRG) are interaction with PBX1. Glycyl lysine isopeptide (Lys-Gly) (interchain with G-Cter in SUMO2) cross-links involve residues Lys-234 and Lys-271. 3 disordered regions span residues 278 to 301 (QQEGPNVSEAQNDNEPSPTSNSTY), 329 to 357 (RPNSSSTSKFSSSMSYPQMKPKSPHNSGL), and 370 to 395 (DMTNSSADLDTNSMLNDSSSDEDLNE). A compositionally biased stretch (low complexity) spans 332 to 343 (SSSTSKFSSSMS). Residues Lys-337, Lys-348, and Lys-350 each participate in a glycyl lysine isopeptide (Lys-Gly) (interchain with G-Cter in SUMO2) cross-link. Ser-351 and Ser-355 each carry phosphoserine. Positions 370–387 (DMTNSSADLDTNSMLNDS) are enriched in polar residues. Lys-429 participates in a covalent cross-link: Glycyl lysine isopeptide (Lys-Gly) (interchain with G-Cter in SUMO2). 2 C2H2-type zinc fingers span residues 440–463 (FQCPFCPFLTMHRRSISRHIENIH) and 471–493 (YKCDECPFTCKSSLKLGAHKQCH). A Glycyl lysine isopeptide (Lys-Gly) (interchain with G-Cter in SUMO2) cross-link involves residue Lys-485. The tract at residues 492–590 (CHTGTSDWDT…PQPPTQAPPL (99 aa)) is disordered. Positions 493–502 (HTGTSDWDTV) are enriched in polar residues. Low complexity predominate over residues 503-515 (NSQSESLSSSLNE). The span at 542–590 (PPQPPPPLPPPPPPPSQPLPQPPPPPLQSPHQVPPPTQQPQPPTQAPPL) shows a compositional bias: pro residues. Residues 593–616 (YKCTMCSYSTMTLKGLRVHQQHKH) form a C2H2-type 6 zinc finger. Glycyl lysine isopeptide (Lys-Gly) (interchain with G-Cter in SUMO2) cross-links involve residues Lys-624, Lys-650, and Lys-661. Residues 629 to 654 (PSSLPLENETDSHPSSSNTVKKSQTS) form a disordered region. Polar residues predominate over residues 641 to 654 (HPSSSNTVKKSQTS). Ser-681 is modified (phosphoserine). Residue Lys-699 forms a Glycyl lysine isopeptide (Lys-Gly) (interchain with G-Cter in SUMO2) linkage. 3 consecutive C2H2-type zinc fingers follow at residues 835-858 (YYCKHCDFNNKSARSVSTHYQRMH), 878-900 (YRCLECYIDYTNFEDLQQHYGEH), and 917-940 (YRCRFCSYTSPNVRSLMPHYQRMH). A Glycyl lysine isopeptide (Lys-Gly) (interchain with G-Cter in SUMO2) cross-link involves residue Lys-978. The disordered stretch occupies residues 980–999 (MATSTPVARGGGLPATFNKN). A C2H2-type 10 zinc finger spans residues 1023 to 1046 (YDCDVCSFASPNMHSVLVHYQKKH). Phosphoserine is present on Ser-1083. Residue Lys-1128 forms a Glycyl lysine isopeptide (Lys-Gly) (interchain with G-Cter in SUMO2) linkage. Ser-1159 is subject to Phosphoserine. Glycyl lysine isopeptide (Lys-Gly) (interchain with G-Cter in SUMO2) cross-links involve residues Lys-1196, Lys-1204, Lys-1210, and Lys-1232. C2H2-type zinc fingers lie at residues 1254-1277 (LKCRQCSYTSPYFYALRKHIKKDH) and 1459-1482 (YQCTVCQSEYNNLHGLLTHYGKKH). A Glycyl lysine isopeptide (Lys-Gly) (interchain with G-Cter in SUMO2) cross-link involves residue Lys-1488. The C2H2-type 13 zinc finger occupies 1504-1527 (YKCRHCPYINTRIHGVLTHYQKRH). Glycyl lysine isopeptide (Lys-Gly) (interchain with G-Cter in SUMO2) cross-links involve residues Lys-1560 and Lys-1580. C2H2-type zinc fingers lie at residues 1566-1589 (YRCKLCPYTHGTLEKLKIHYEKYH), 1649-1672 (FRCQLCKYFCSTRKGIARHYRIKH), and 1686-1709 (FKCALCAYTNPIRKGLAAHYQKRH). Glycyl lysine isopeptide (Lys-Gly) (interchain with G-Cter in SUMO2) cross-links involve residues Lys-1687 and Lys-1769. A C2H2-type 17 zinc finger spans residues 1881-1903 (FQCKHCDSKLQSIAELTSHLNIH). A Glycyl lysine isopeptide (Lys-Gly) (interchain with G-Cter in SUMO2) cross-link involves residue Lys-1935. The C2H2-type 18; degenerate zinc-finger motif lies at 1957-1981 (YKCKFCVEVHPTLRAICNHLRKHVQ). Lys-1993 carries the post-translational modification N6-methyllysine. 3 consecutive C2H2-type zinc fingers follow at residues 2014-2037 (YSCQYCSFVSAFRHNLDRHMQTHH), 2043-2066 (FRCKLCSFKSSYNSRLKTHILKAH), and 2072-2095 (YKCSWCSFSTMTISQLKEHSLKVH). A Glycyl lysine isopeptide (Lys-Gly) (interchain with G-Cter in SUMO2) cross-link involves residue Lys-2093. 2 stretches are compositionally biased toward polar residues: residues 2112-2121 (SHAHPSSQKA) and 2132-2149 (DSSYSEPPDVQQQLNHYQ). Residues 2112–2172 (SHAHPSSQKA…VPPSGTAAGT (61 aa)) are disordered. Phosphoserine is present on residues Ser-2161 and Ser-2166. 3 consecutive C2H2-type zinc fingers follow at residues 2180 to 2203 (LHCEFCEFSSGYIQSIRRHYRDKH), 2209 to 2232 (FKCKDCSFYTGFKSAFTMHVEAGH), and 2243 to 2265 (LRCPLCLYHTKYKRNMIDHIVLH). Lys-2282 is covalently cross-linked (Glycyl lysine isopeptide (Lys-Gly) (interchain with G-Cter in SUMO2)). 2 consecutive C2H2-type zinc fingers follow at residues 2289–2311 (FRCDKCTFTCSSDESLQQHIEKH) and 2317–2340 (YKCQLCYYETKHTEELDTHLRDEH). Residues 2361-2387 (KEKIESSSSEDEDKDDEMSSKAEDREL) form a disordered region. Over residues 2377–2387 (EMSSKAEDREL) the composition is skewed to basic and acidic residues. Residues 2403 to 2425 (FPCEFCGRAFSQGSEWERHVLRH) form a C2H2-type 27 zinc finger. Lys-2493 participates in a covalent cross-link: Glycyl lysine isopeptide (Lys-Gly) (interchain with G-Cter in SUMO2).

Interacts with PBX1 isoform PBX1b; this interaction prevents PBX1-HOXA9 heterodimer from forming and binding to DNA. Expressed in the cerebral cortex (at protein level). Expressed in embryonic stem cells (at protein level). Expressed in heart, liver, kidney, muscle, and female and male genital tracts (at protein level).

It is found in the nucleus. In terms of biological role, zinc finger nuclear factor involved in transcription by regulating chromatin structure and organization. Involved in the pluripotency and differentiation of embryonic stem cells by regulating SOX2, POU5F1/OCT4, and NANOG. By binding PBX1, prevents the heterodimerization of PBX1 and HOXA9 and their binding to DNA. Regulates neuronal development and neural cell differentiation. In Mus musculus (Mouse), this protein is Zinc finger protein 462.